A 542-amino-acid polypeptide reads, in one-letter code: Chaperonin GroEL (542 aa).

Residues 29-32 (TMGP), 86-90 (DGTTT), Gly-413, 476-478 (NAA), and Asp-492 each bind ATP. Positions 521-542 (KPDPNANNQAPAAPQGGMGGMM) are disordered. Residues 524-535 (PNANNQAPAAPQ) are compositionally biased toward low complexity.

It belongs to the chaperonin (HSP60) family. As to quaternary structure, forms a cylinder of 14 subunits composed of two heptameric rings stacked back-to-back. Interacts with the co-chaperonin GroES.

It localises to the cytoplasm. The catalysed reaction is ATP + H2O + a folded polypeptide = ADP + phosphate + an unfolded polypeptide.. Its function is as follows. Together with its co-chaperonin GroES, plays an essential role in assisting protein folding. The GroEL-GroES system forms a nano-cage that allows encapsulation of the non-native substrate proteins and provides a physical environment optimized to promote and accelerate protein folding. The sequence is that of Chaperonin GroEL from Limosilactobacillus reuteri subsp. reuteri (strain JCM 1112) (Lactobacillus reuteri).